The sequence spans 136 residues: Aspartate 1-decarboxylase (136 aa).

The active-site Schiff-base intermediate with substrate; via pyruvic acid is the S25. S25 is modified (pyruvic acid (Ser)). Residue T57 participates in substrate binding. Catalysis depends on Y58, which acts as the Proton donor. 73–75 (GAA) is a binding site for substrate.

Belongs to the PanD family. Heterooctamer of four alpha and four beta subunits. The cofactor is pyruvate. Post-translationally, is synthesized initially as an inactive proenzyme, which is activated by self-cleavage at a specific serine bond to produce a beta-subunit with a hydroxyl group at its C-terminus and an alpha-subunit with a pyruvoyl group at its N-terminus.

It is found in the cytoplasm. It carries out the reaction L-aspartate + H(+) = beta-alanine + CO2. It functions in the pathway cofactor biosynthesis; (R)-pantothenate biosynthesis; beta-alanine from L-aspartate: step 1/1. Functionally, catalyzes the pyruvoyl-dependent decarboxylation of aspartate to produce beta-alanine. The sequence is that of Aspartate 1-decarboxylase from Corynebacterium glutamicum (strain R).